Here is an 811-residue protein sequence, read N- to C-terminus: DEP domain-containing protein 1A (811 aa).

In terms of domain architecture, DEP spans 24–108 (FRAGMPLRKH…DNNQLFRFPA (85 aa)). The Rho-GAP domain occupies 281–321 (DYFLDLPEPLLTFEYYELFVNILVVCGYITVSDRSSGIHKI). At Ser-512 the chain carries Phosphoserine. The interaction with ZNF224 stretch occupies residues 598-653 (AIDALQLCCLLLPPPNRRKLQLLMRMISRMSQNVDMPKLHDAMGTRSLMIHTFSRC).

Isoform 2 and isoform 5 can form homodimers and heterodimers. Interacts with ZNF224. As to expression, expressed in testis. Up-regulated in bladder cancer cells (at protein level).

The protein localises to the nucleus. In terms of biological role, may be involved in transcriptional regulation as a transcriptional corepressor. The DEPDC1A-ZNF224 complex may play a critical role in bladder carcinogenesis by repressing the transcription of the A20 gene, leading to transport of NF-KB protein into the nucleus, resulting in suppression of apoptosis of bladder cancer cells. The polypeptide is DEP domain-containing protein 1A (DEPDC1) (Homo sapiens (Human)).